We begin with the raw amino-acid sequence, 711 residues long: Ribosomal RNA large subunit methyltransferase K/L (711 aa).

The 112-residue stretch at 42 to 153 folds into the THUMP domain; it reads DAQRAVLWSR…KGRATISVDL (112 aa).

It belongs to the methyltransferase superfamily. RlmKL family.

It localises to the cytoplasm. It carries out the reaction guanosine(2445) in 23S rRNA + S-adenosyl-L-methionine = N(2)-methylguanosine(2445) in 23S rRNA + S-adenosyl-L-homocysteine + H(+). The catalysed reaction is guanosine(2069) in 23S rRNA + S-adenosyl-L-methionine = N(2)-methylguanosine(2069) in 23S rRNA + S-adenosyl-L-homocysteine + H(+). Specifically methylates the guanine in position 2445 (m2G2445) and the guanine in position 2069 (m7G2069) of 23S rRNA. The chain is Ribosomal RNA large subunit methyltransferase K/L from Xanthomonas campestris pv. campestris (strain B100).